The sequence spans 205 residues: Thiamine-phosphate synthase (205 aa).

Residues 34 to 38 (QLRCK) and asparagine 66 contribute to the 4-amino-2-methyl-5-(diphosphooxymethyl)pyrimidine site. 2 residues coordinate Mg(2+): aspartate 67 and aspartate 86. Residue serine 105 coordinates 4-amino-2-methyl-5-(diphosphooxymethyl)pyrimidine. 131–133 (TTT) is a binding site for 2-[(2R,5Z)-2-carboxy-4-methylthiazol-5(2H)-ylidene]ethyl phosphate. 4-amino-2-methyl-5-(diphosphooxymethyl)pyrimidine is bound at residue lysine 134. Position 163 (glycine 163) interacts with 2-[(2R,5Z)-2-carboxy-4-methylthiazol-5(2H)-ylidene]ethyl phosphate.

It belongs to the thiamine-phosphate synthase family. Mg(2+) serves as cofactor.

It catalyses the reaction 2-[(2R,5Z)-2-carboxy-4-methylthiazol-5(2H)-ylidene]ethyl phosphate + 4-amino-2-methyl-5-(diphosphooxymethyl)pyrimidine + 2 H(+) = thiamine phosphate + CO2 + diphosphate. The enzyme catalyses 2-(2-carboxy-4-methylthiazol-5-yl)ethyl phosphate + 4-amino-2-methyl-5-(diphosphooxymethyl)pyrimidine + 2 H(+) = thiamine phosphate + CO2 + diphosphate. The catalysed reaction is 4-methyl-5-(2-phosphooxyethyl)-thiazole + 4-amino-2-methyl-5-(diphosphooxymethyl)pyrimidine + H(+) = thiamine phosphate + diphosphate. Its pathway is cofactor biosynthesis; thiamine diphosphate biosynthesis; thiamine phosphate from 4-amino-2-methyl-5-diphosphomethylpyrimidine and 4-methyl-5-(2-phosphoethyl)-thiazole: step 1/1. In terms of biological role, condenses 4-methyl-5-(beta-hydroxyethyl)thiazole monophosphate (THZ-P) and 2-methyl-4-amino-5-hydroxymethyl pyrimidine pyrophosphate (HMP-PP) to form thiamine monophosphate (TMP). The sequence is that of Thiamine-phosphate synthase from Neisseria gonorrhoeae (strain ATCC 700825 / FA 1090).